Reading from the N-terminus, the 103-residue chain is Large ribosomal subunit protein eL14 (103 aa).

This sequence belongs to the eukaryotic ribosomal protein eL14 family.

In Pyrobaculum arsenaticum (strain DSM 13514 / JCM 11321 / PZ6), this protein is Large ribosomal subunit protein eL14.